The primary structure comprises 469 residues: 3-isopropylmalate dehydratase large subunit 2 (469 aa).

Residues cysteine 347, cysteine 408, and cysteine 411 each contribute to the [4Fe-4S] cluster site.

This sequence belongs to the aconitase/IPM isomerase family. LeuC type 1 subfamily. In terms of assembly, heterodimer of LeuC and LeuD. The cofactor is [4Fe-4S] cluster.

The catalysed reaction is (2R,3S)-3-isopropylmalate = (2S)-2-isopropylmalate. Its pathway is amino-acid biosynthesis; L-leucine biosynthesis; L-leucine from 3-methyl-2-oxobutanoate: step 2/4. In terms of biological role, catalyzes the isomerization between 2-isopropylmalate and 3-isopropylmalate, via the formation of 2-isopropylmaleate. In Mannheimia succiniciproducens (strain KCTC 0769BP / MBEL55E), this protein is 3-isopropylmalate dehydratase large subunit 2.